A 354-amino-acid chain; its full sequence is Carbonic anhydrase 12 (354 aa).

Residues 1 to 24 (MPRRSLHAAAVLLLVILKEQPSSP) form the signal peptide. Topologically, residues 25–301 (APVNGSKWTY…VQVCTAAGLS (277 aa)) are extracellular. Residues Asn28 and Asn80 are each glycosylated (N-linked (GlcNAc...) asparagine). One can recognise an Alpha-carbonic anhydrase domain in the interval 30–289 (SKWTYFGPDG…FDERLVYTSF (260 aa)). Cys50 and Cys230 form a disulfide bridge. His94 serves as the catalytic Proton donor/acceptor. His119, His121, and His145 together coordinate Zn(2+). Asn162 is a glycosylation site (N-linked (GlcNAc...) asparagine). 226 to 227 (TT) lines the substrate pocket. A helical transmembrane segment spans residues 302 to 322 (LGIILSLALAGILGICIVVVV). The Cytoplasmic segment spans residues 323 to 354 (SIWLFRRKSIKKGDNKGVIYKPATKMETEAHA).

This sequence belongs to the alpha-carbonic anhydrase family. Homodimer. Requires Zn(2+) as cofactor. As to expression, highly expressed in colon, kidney, prostate, intestine and activated lymphocytes. Expressed at much higher levels in the renal cell cancers than in surrounding normal kidney tissue. Moderately expressed in pancreas, ovary and testis. Expressed in sweat glands and bronchiolar epithelium.

Its subcellular location is the membrane. The protein localises to the cell membrane. The catalysed reaction is hydrogencarbonate + H(+) = CO2 + H2O. Inhibited by coumarins, saccharin, sulfonamide derivatives such as acetazolamide (AZA), benzenesulfonamide and derivatives (4-carboxyethylbenzene-sulfonamide, 4-carboxyethylbenzene-sulfonamide ethyl ester, 4-(acetyl-2-aminoethyl)benzene-sulfonamide, 4-aminoethylbenzene-sulfonamide) and Foscarnet (phosphonoformate trisodium salt). Reversible hydration of carbon dioxide. The sequence is that of Carbonic anhydrase 12 from Homo sapiens (Human).